A 333-amino-acid polypeptide reads, in one-letter code: UDP-N-acetylglucosamine--N-acetylmuramyl-(pentapeptide) pyrophosphoryl-undecaprenol N-acetylglucosamine transferase (333 aa).

Residues 10–12 (TGG), Asn-124, Ser-177, and Gln-275 contribute to the UDP-N-acetyl-alpha-D-glucosamine site.

Belongs to the glycosyltransferase 28 family. MurG subfamily.

The protein resides in the cell inner membrane. It catalyses the reaction di-trans,octa-cis-undecaprenyl diphospho-N-acetyl-alpha-D-muramoyl-L-alanyl-D-glutamyl-meso-2,6-diaminopimeloyl-D-alanyl-D-alanine + UDP-N-acetyl-alpha-D-glucosamine = di-trans,octa-cis-undecaprenyl diphospho-[N-acetyl-alpha-D-glucosaminyl-(1-&gt;4)]-N-acetyl-alpha-D-muramoyl-L-alanyl-D-glutamyl-meso-2,6-diaminopimeloyl-D-alanyl-D-alanine + UDP + H(+). It functions in the pathway cell wall biogenesis; peptidoglycan biosynthesis. Cell wall formation. Catalyzes the transfer of a GlcNAc subunit on undecaprenyl-pyrophosphoryl-MurNAc-pentapeptide (lipid intermediate I) to form undecaprenyl-pyrophosphoryl-MurNAc-(pentapeptide)GlcNAc (lipid intermediate II). The chain is UDP-N-acetylglucosamine--N-acetylmuramyl-(pentapeptide) pyrophosphoryl-undecaprenol N-acetylglucosamine transferase from Nitratiruptor sp. (strain SB155-2).